The chain runs to 461 residues: tRNA-2-methylthio-N(6)-dimethylallyladenosine synthase (461 aa).

The MTTase N-terminal domain occupies 25–143 (PTYSIITHGC…LPYLIDRHLS (119 aa)). Residues C34, C70, C104, C179, C183, and C186 each contribute to the [4Fe-4S] cluster site. The Radical SAM core domain maps to 165 to 395 (RDNEYVGYVN…LDVAYPIFYE (231 aa)). The TRAM domain maps to 398-461 (KSYLGTIQEV…SFALTGEMVD (64 aa)).

This sequence belongs to the methylthiotransferase family. MiaB subfamily. As to quaternary structure, monomer. Requires [4Fe-4S] cluster as cofactor.

It is found in the cytoplasm. It carries out the reaction N(6)-dimethylallyladenosine(37) in tRNA + (sulfur carrier)-SH + AH2 + 2 S-adenosyl-L-methionine = 2-methylsulfanyl-N(6)-dimethylallyladenosine(37) in tRNA + (sulfur carrier)-H + 5'-deoxyadenosine + L-methionine + A + S-adenosyl-L-homocysteine + 2 H(+). Its function is as follows. Catalyzes the methylthiolation of N6-(dimethylallyl)adenosine (i(6)A), leading to the formation of 2-methylthio-N6-(dimethylallyl)adenosine (ms(2)i(6)A) at position 37 in tRNAs that read codons beginning with uridine. The chain is tRNA-2-methylthio-N(6)-dimethylallyladenosine synthase from Finegoldia magna (strain ATCC 29328 / DSM 20472 / WAL 2508) (Peptostreptococcus magnus).